The chain runs to 367 residues: Cell-death-related nuclease 7 (367 aa).

Residues 1–18 form the signal peptide; that stretch reads MRLYFVLIFSVIFTTGNG. A glycan (N-linked (GlcNAc...) asparagine) is linked at N253.

It belongs to the DNase II family.

This is Cell-death-related nuclease 7 (crn-7) from Caenorhabditis elegans.